A 97-amino-acid chain; its full sequence is Aspartyl/glutamyl-tRNA(Asn/Gln) amidotransferase subunit C (97 aa).

The protein belongs to the GatC family. Heterotrimer of A, B and C subunits.

The enzyme catalyses L-glutamyl-tRNA(Gln) + L-glutamine + ATP + H2O = L-glutaminyl-tRNA(Gln) + L-glutamate + ADP + phosphate + H(+). The catalysed reaction is L-aspartyl-tRNA(Asn) + L-glutamine + ATP + H2O = L-asparaginyl-tRNA(Asn) + L-glutamate + ADP + phosphate + 2 H(+). Its function is as follows. Allows the formation of correctly charged Asn-tRNA(Asn) or Gln-tRNA(Gln) through the transamidation of misacylated Asp-tRNA(Asn) or Glu-tRNA(Gln) in organisms which lack either or both of asparaginyl-tRNA or glutaminyl-tRNA synthetases. The reaction takes place in the presence of glutamine and ATP through an activated phospho-Asp-tRNA(Asn) or phospho-Glu-tRNA(Gln). The polypeptide is Aspartyl/glutamyl-tRNA(Asn/Gln) amidotransferase subunit C (Thermosynechococcus vestitus (strain NIES-2133 / IAM M-273 / BP-1)).